The chain runs to 897 residues: F-BAR domain only protein 1 (897 aa).

The interval 1 to 276 (MIHFFHTLQG…VGFEEYLSSL (276 aa)) is mediates membrane-binding. An F-BAR domain is found at 2–248 (IHFFHTLQGE…NVENIGIENL (247 aa)). The stretch at 134 to 154 (LQKTREGYHSKCVELERLRKE) forms a coiled coil. Positions 475–537 (VEDSGLDSPS…PNPAPSSQSN (63 aa)) are disordered. The segment covering 501-520 (PSSQSQSKDSINAASQSRGG) has biased composition (polar residues). The 265-residue stretch at 630–894 (SWPVAAAITE…RFATGKYMAG (265 aa)) folds into the MHD domain.

This sequence belongs to the FCHO family. May oligomerize and form homotetramer. Interacts with acvr1l/alk8; linking this receptor to clathrin-mediated endocytosis.

The protein localises to the membrane. It localises to the clathrin-coated pit. Functionally, may function in an early step of clathrin-mediated endocytosis. May regulate Bmp signaling by regulating clathrin-mediated endocytosis of Bmp receptors. The polypeptide is F-BAR domain only protein 1 (fcho1) (Danio rerio (Zebrafish)).